A 161-amino-acid chain; its full sequence is MPSMDIVSEVDEVELRNAVDNSVRELKSRFDFRGKDASIEYKDHVVTLSAEDDFQCQQLVDILRMQLSKRNVDPASMDVDDKSVHSGKTFSLKVRFKEGIEVLTAKKLVKIIKDSKLKVQSSIQGDSVRVTGKKRDDLQAVMTLARESGLDQPFQFNNFRD.

It belongs to the YajQ family.

Functionally, nucleotide-binding protein. In Shewanella woodyi (strain ATCC 51908 / MS32), this protein is Nucleotide-binding protein Swoo_3646.